Reading from the N-terminus, the 22-residue chain is EQLIELVGPWKTVYIVHFNGET.

It belongs to the calycin superfamily. Lipocalin family. Homodimer. The N-terminus is blocked.

Functionally, binds the chemical odorant, 2-isobutyl-3-methoxypyrazine. In Oryctolagus cuniculus (Rabbit), this protein is Odorant-binding protein 1.